The primary structure comprises 83 residues: Consomatin Rs1 (83 aa).

An N-terminal signal peptide occupies residues 1–22; sequence MQTAYWVMVMMMVWITAPLSEG. Positions 23–55 are excised as a propeptide; it reads GKLNNVIRGLVPDDVTPKRISQSLISRRRFDSR. A disulfide bridge connects residues C62 and C67. D-tryptophan is present on W64. At P68 the chain carries 4-hydroxyproline. Positions 71 to 83 are excised as a propeptide; it reads LHGDNYDLKEKDK.

It belongs to the conotoxin C superfamily. Consomatin family. Expressed by the venom duct.

It localises to the secreted. Its function is as follows. Moderately activates human somatostatin receptors (SSTR) with a preferential activation of SSTR1 and SSTR4. In vivo, does not cause behavioral changes in mice within a few minutes of intracranial injection, but causes a progressive loss of movement thereafter. Four to five hours after injection, mice recover, even with the highest dose tested. Shows antinociception and antihyperalgesia activities in two mouse models of acute pain, most probably by acting outside the central nervous system. The sequence is that of Consomatin Rs1 from Conus raulsilvai (Sea snail).